A 197-amino-acid polypeptide reads, in one-letter code: Holliday junction branch migration complex subunit RuvA (197 aa).

The domain I stretch occupies residues 1–64 (MIALLRGLVV…EDVLALYGFL (64 aa)). The segment at 65-143 (TQDEKALFEK…AATGEEPGAP (79 aa)) is domain II. The tract at residues 144-153 (AAEALSPIDQ) is flexible linker. The domain III stretch occupies residues 153-197 (QDVLSALLNLGCARPQAEAAVRKAKAAGASLDFEPLFRRALELVR).

This sequence belongs to the RuvA family. Homotetramer. Forms an RuvA(8)-RuvB(12)-Holliday junction (HJ) complex. HJ DNA is sandwiched between 2 RuvA tetramers; dsDNA enters through RuvA and exits via RuvB. An RuvB hexamer assembles on each DNA strand where it exits the tetramer. Each RuvB hexamer is contacted by two RuvA subunits (via domain III) on 2 adjacent RuvB subunits; this complex drives branch migration. In the full resolvosome a probable DNA-RuvA(4)-RuvB(12)-RuvC(2) complex forms which resolves the HJ.

The protein localises to the cytoplasm. In terms of biological role, the RuvA-RuvB-RuvC complex processes Holliday junction (HJ) DNA during genetic recombination and DNA repair, while the RuvA-RuvB complex plays an important role in the rescue of blocked DNA replication forks via replication fork reversal (RFR). RuvA specifically binds to HJ cruciform DNA, conferring on it an open structure. The RuvB hexamer acts as an ATP-dependent pump, pulling dsDNA into and through the RuvAB complex. HJ branch migration allows RuvC to scan DNA until it finds its consensus sequence, where it cleaves and resolves the cruciform DNA. The chain is Holliday junction branch migration complex subunit RuvA from Solibacter usitatus (strain Ellin6076).